The sequence spans 91 residues: Small ribosomal subunit protein bS18 (91 aa).

This sequence belongs to the bacterial ribosomal protein bS18 family. Part of the 30S ribosomal subunit. Forms a tight heterodimer with protein bS6.

Its function is as follows. Binds as a heterodimer with protein bS6 to the central domain of the 16S rRNA, where it helps stabilize the platform of the 30S subunit. This Wolbachia sp. subsp. Brugia malayi (strain TRS) protein is Small ribosomal subunit protein bS18.